The sequence spans 266 residues: Thiazole synthase (266 aa).

The Schiff-base intermediate with DXP role is filled by lysine 106. 1-deoxy-D-xylulose 5-phosphate-binding positions include glycine 167, 193–194, and 215–216; these read AG and NT.

This sequence belongs to the ThiG family. In terms of assembly, homotetramer. Forms heterodimers with either ThiH or ThiS.

It localises to the plastid. Its subcellular location is the chloroplast. The enzyme catalyses [ThiS sulfur-carrier protein]-C-terminal-Gly-aminoethanethioate + 2-iminoacetate + 1-deoxy-D-xylulose 5-phosphate = [ThiS sulfur-carrier protein]-C-terminal Gly-Gly + 2-[(2R,5Z)-2-carboxy-4-methylthiazol-5(2H)-ylidene]ethyl phosphate + 2 H2O + H(+). The protein operates within cofactor biosynthesis; thiamine diphosphate biosynthesis. In terms of biological role, catalyzes the rearrangement of 1-deoxy-D-xylulose 5-phosphate (DXP) to produce the thiazole phosphate moiety of thiamine. Sulfur is provided by the thiocarboxylate moiety of the carrier protein ThiS. In vitro, sulfur can be provided by H(2)S. In Cyanidium caldarium (Red alga), this protein is Thiazole synthase.